A 348-amino-acid polypeptide reads, in one-letter code: Putative [LysW]-L-2-aminoadipate/[LysW]-L-glutamate phosphate reductase (348 aa).

An NADP(+)-binding site is contributed by 9-12 (SGYV). The active site involves cysteine 149. Residue asparagine 315 coordinates NADP(+).

This sequence belongs to the NAGSA dehydrogenase family. Type 1 subfamily. LysY sub-subfamily.

Its subcellular location is the cytoplasm. It catalyses the reaction [amino-group carrier protein]-C-terminal-N-(1-carboxy-5-oxopentan-1-yl)-L-glutamine + phosphate + NADP(+) = [amino-group carrier protein]-C-terminal-N-(1-carboxy-5-phosphooxy-5-oxopentan-1-yl)-L-glutamine + NADPH + H(+). The enzyme catalyses [amino-group carrier protein]-C-terminal-gamma-(L-glutamyl-5-semialdehyde)-L-glutamate + phosphate + NADP(+) = [amino-group carrier protein]-C-terminal-gamma-(5-phospho-L-glutamyl)-L-glutamate + NADPH + H(+). The protein operates within amino-acid biosynthesis; L-lysine biosynthesis via AAA pathway; L-lysine from L-alpha-aminoadipate (Thermus route): step 3/5. It functions in the pathway amino-acid biosynthesis; L-arginine biosynthesis. Its function is as follows. Involved in both the arginine and lysine biosynthetic pathways. The chain is Putative [LysW]-L-2-aminoadipate/[LysW]-L-glutamate phosphate reductase from Nitrosopumilus maritimus (strain SCM1).